The chain runs to 450 residues: Ribosomal protein uS12 methylthiotransferase RimO (450 aa).

One can recognise an MTTase N-terminal domain in the interval 10 to 125 (SRIALVSLGC…VVDIVRRAAT (116 aa)). The [4Fe-4S] cluster site is built by Cys19, Cys54, Cys88, Cys162, Cys166, and Cys169. In terms of domain architecture, Radical SAM core spans 148-378 (SGSPFTAYLK…AAVQREVSRA (231 aa)). Positions 381–447 (RARVGSEVTV…PYDLRARVLS (67 aa)) constitute a TRAM domain.

This sequence belongs to the methylthiotransferase family. RimO subfamily. [4Fe-4S] cluster serves as cofactor.

Its subcellular location is the cytoplasm. It catalyses the reaction L-aspartate(89)-[ribosomal protein uS12]-hydrogen + (sulfur carrier)-SH + AH2 + 2 S-adenosyl-L-methionine = 3-methylsulfanyl-L-aspartate(89)-[ribosomal protein uS12]-hydrogen + (sulfur carrier)-H + 5'-deoxyadenosine + L-methionine + A + S-adenosyl-L-homocysteine + 2 H(+). Catalyzes the methylthiolation of an aspartic acid residue of ribosomal protein uS12. This Desulforudis audaxviator (strain MP104C) protein is Ribosomal protein uS12 methylthiotransferase RimO.